The following is a 295-amino-acid chain: Protoheme IX farnesyltransferase (295 aa).

The next 9 membrane-spanning stretches (helical) occupy residues 27–47 (IMYL…GNIH), 48–68 (PFIG…AGAI), 93–115 (IARS…VMMI), 119–136 (YLSG…SLVY), 147–167 (NIVI…TSVT), 175–195 (LILF…LSLL), 219–239 (IYIL…GIFL), 247–267 (TCAI…FVSI), and 275–295 (MFTY…ISSF).

This sequence belongs to the UbiA prenyltransferase family. Protoheme IX farnesyltransferase subfamily.

It localises to the cell inner membrane. The catalysed reaction is heme b + (2E,6E)-farnesyl diphosphate + H2O = Fe(II)-heme o + diphosphate. The protein operates within porphyrin-containing compound metabolism; heme O biosynthesis; heme O from protoheme: step 1/1. Converts heme B (protoheme IX) to heme O by substitution of the vinyl group on carbon 2 of heme B porphyrin ring with a hydroxyethyl farnesyl side group. This chain is Protoheme IX farnesyltransferase, found in Ehrlichia chaffeensis (strain ATCC CRL-10679 / Arkansas).